A 189-amino-acid polypeptide reads, in one-letter code: uncharacterized protein (189 aa).

This sequence belongs to the OsmC/Ohr family.

This is an uncharacterized protein from Methanocaldococcus jannaschii (strain ATCC 43067 / DSM 2661 / JAL-1 / JCM 10045 / NBRC 100440) (Methanococcus jannaschii).